Reading from the N-terminus, the 214-residue chain is Thymidylate kinase (214 aa).

10-17 (GIDGCGKT) is an ATP binding site.

It belongs to the thymidylate kinase family.

The enzyme catalyses dTMP + ATP = dTDP + ADP. Functionally, phosphorylation of dTMP to form dTDP in both de novo and salvage pathways of dTTP synthesis. In Prochlorococcus marinus subsp. pastoris (strain CCMP1986 / NIES-2087 / MED4), this protein is Thymidylate kinase.